Consider the following 264-residue polypeptide: Glutamate racemase (264 aa).

Substrate is bound by residues 12–13 (DS) and 44–45 (YG). Cysteine 75 (proton donor/acceptor) is an active-site residue. Substrate is bound at residue 76–77 (NT). Catalysis depends on cysteine 186, which acts as the Proton donor/acceptor. 187-188 (TH) contacts substrate.

This sequence belongs to the aspartate/glutamate racemases family.

The enzyme catalyses L-glutamate = D-glutamate. It functions in the pathway cell wall biogenesis; peptidoglycan biosynthesis. Provides the (R)-glutamate required for cell wall biosynthesis. In Stutzerimonas stutzeri (strain A1501) (Pseudomonas stutzeri), this protein is Glutamate racemase.